Reading from the N-terminus, the 213-residue chain is ATP synthase subunit b 2 (213 aa).

The interval 1 to 45 is disordered; sequence MFVTEAYAQSAPTVGETHTETPAVGQPQPEATHTETGVAHGAEHG. Residues 57-76 traverse the membrane as a helical segment; it reads TYASQVLWLAITFGLFYLLM.

It belongs to the ATPase B chain family. In terms of assembly, F-type ATPases have 2 components, F(1) - the catalytic core - and F(0) - the membrane proton channel. F(1) has five subunits: alpha(3), beta(3), gamma(1), delta(1), epsilon(1). F(0) has three main subunits: a(1), b(2) and c(10-14). The alpha and beta chains form an alternating ring which encloses part of the gamma chain. F(1) is attached to F(0) by a central stalk formed by the gamma and epsilon chains, while a peripheral stalk is formed by the delta and b chains.

The protein localises to the cell inner membrane. Its function is as follows. F(1)F(0) ATP synthase produces ATP from ADP in the presence of a proton or sodium gradient. F-type ATPases consist of two structural domains, F(1) containing the extramembraneous catalytic core and F(0) containing the membrane proton channel, linked together by a central stalk and a peripheral stalk. During catalysis, ATP synthesis in the catalytic domain of F(1) is coupled via a rotary mechanism of the central stalk subunits to proton translocation. Functionally, component of the F(0) channel, it forms part of the peripheral stalk, linking F(1) to F(0). The b'-subunit is a diverged and duplicated form of b found in plants and photosynthetic bacteria. This chain is ATP synthase subunit b 2 (atpF2), found in Agrobacterium fabrum (strain C58 / ATCC 33970) (Agrobacterium tumefaciens (strain C58)).